The sequence spans 633 residues: uncharacterized protein (633 aa).

The tract at residues 12–43 (ESGTNNYSDTIANGNTLPPRSKKGHSGRRKRS) is disordered. The span at 13–29 (SGTNNYSDTIANGNTLP) shows a compositional bias: polar residues. Residues 31 to 42 (RSKKGHSGRRKR) show a composition bias toward basic residues. The next 2 helical transmembrane spans lie at 99-118 (ILFG…SSAL) and 217-233 (NCAF…ITAC). The tract at residues 593-612 (DAETNKATGSAKSENIETKS) is disordered.

The protein resides in the membrane. This is an uncharacterized protein from Saccharomyces cerevisiae (strain ATCC 204508 / S288c) (Baker's yeast).